A 229-amino-acid polypeptide reads, in one-letter code: Protein FAM3C (229 aa).

A signal peptide spans 1–24 (MRIAGAIKFVVAVALFLLTFYVIS). 2 disulfides stabilise this stretch: cysteine 59-cysteine 87 and cysteine 65-cysteine 222. The GG-type lectin domain maps to 68–226 (KHFAFKIASG…VEMEGCIPQK (159 aa)).

The protein belongs to the FAM3 family. As to expression, expressed in the retinal ganglion cell layer.

Its subcellular location is the secreted. Involved in retinal laminar formation. In Xenopus laevis (African clawed frog), this protein is Protein FAM3C (fam3c).